A 153-amino-acid polypeptide reads, in one-letter code: SsrA-binding protein (153 aa).

Residues 132–153 (REKDWLRERERVMKHDTRRRSD) are disordered.

It belongs to the SmpB family.

It is found in the cytoplasm. In terms of biological role, required for rescue of stalled ribosomes mediated by trans-translation. Binds to transfer-messenger RNA (tmRNA), required for stable association of tmRNA with ribosomes. tmRNA and SmpB together mimic tRNA shape, replacing the anticodon stem-loop with SmpB. tmRNA is encoded by the ssrA gene; the 2 termini fold to resemble tRNA(Ala) and it encodes a 'tag peptide', a short internal open reading frame. During trans-translation Ala-aminoacylated tmRNA acts like a tRNA, entering the A-site of stalled ribosomes, displacing the stalled mRNA. The ribosome then switches to translate the ORF on the tmRNA; the nascent peptide is terminated with the 'tag peptide' encoded by the tmRNA and targeted for degradation. The ribosome is freed to recommence translation, which seems to be the essential function of trans-translation. The protein is SsrA-binding protein of Bordetella avium (strain 197N).